The following is a 323-amino-acid chain: Synaptonemal complex central element protein 1 (323 aa).

A compositionally biased stretch (polar residues) spans 1–10 (MAGRPGSSNA). Disordered stretches follow at residues 1-31 (MAGRPGSSNAEAAGAVGPTDEARGQAESSQK) and 294-323 (KQEEEAGLGEAANPKPLGVSEEKDQEPSTK). Basic and acidic residues-rich tracts occupy residues 20 to 31 (DEARGQAESSQK) and 313 to 323 (SEEKDQEPSTK). The stretch at 25–290 (QAESSQKIED…EKLGVQVLAQ (266 aa)) forms a coiled coil.

The protein belongs to the SYCE family. Homodimer. Found in a complex with SYCP1 and SYCE2. Interacts with SYCP1, SYCE2 and SYCE3. Interacts with SIX6OS1.

It localises to the nucleus. The protein resides in the chromosome. Its function is as follows. Major component of the transverse central element of synaptonemal complexes (SCS), formed between homologous chromosomes during meiotic prophase. Requires SYCP1 in order to be incorporated into the central element. May have a role in the synaptonemal complex assembly, stabilization and recombination. The chain is Synaptonemal complex central element protein 1 (SYCE1) from Bos taurus (Bovine).